A 127-amino-acid chain; its full sequence is Large ribosomal subunit protein bL12 (127 aa).

It belongs to the bacterial ribosomal protein bL12 family. As to quaternary structure, homodimer. Part of the ribosomal stalk of the 50S ribosomal subunit. Forms a multimeric L10(L12)X complex, where L10 forms an elongated spine to which 2 to 4 L12 dimers bind in a sequential fashion. Binds GTP-bound translation factors.

Forms part of the ribosomal stalk which helps the ribosome interact with GTP-bound translation factors. Is thus essential for accurate translation. The sequence is that of Large ribosomal subunit protein bL12 from Streptomyces avermitilis (strain ATCC 31267 / DSM 46492 / JCM 5070 / NBRC 14893 / NCIMB 12804 / NRRL 8165 / MA-4680).